Reading from the N-terminus, the 238-residue chain is Probable transcriptional regulatory protein Mmwyl1_2868 (238 aa).

The protein belongs to the TACO1 family.

The protein localises to the cytoplasm. The polypeptide is Probable transcriptional regulatory protein Mmwyl1_2868 (Marinomonas sp. (strain MWYL1)).